Here is a 544-residue protein sequence, read N- to C-terminus: Chaperonin GroEL (544 aa).

ATP is bound by residues 30–33 (TLGP), K51, 87–91 (DGTTT), G415, and D495.

It belongs to the chaperonin (HSP60) family. Forms a cylinder of 14 subunits composed of two heptameric rings stacked back-to-back. Interacts with the co-chaperonin GroES.

It is found in the cytoplasm. It carries out the reaction ATP + H2O + a folded polypeptide = ADP + phosphate + an unfolded polypeptide.. Functionally, together with its co-chaperonin GroES, plays an essential role in assisting protein folding. The GroEL-GroES system forms a nano-cage that allows encapsulation of the non-native substrate proteins and provides a physical environment optimized to promote and accelerate protein folding. This Bartonella bacilliformis protein is Chaperonin GroEL.